The sequence spans 228 residues: MDDKQKTNEEVKASSFDSEKSSKNQAFENTEEPAEGFQNVQHDNGSNPAQKQNSEAKEASKDQTNTNNNELSKKLEQLETERLTLQEKIAVLEQQHRELEEFLLKMKHEFALAKEALKRDQEKKERLLAESMARDLFPILDTLDHALEHDGENNGLRLIRSQLVSVLEKYGVVEVGKEGEVFDPNWHEFLGYAEGPENKIIKVVRKGYKIGDTLLRPALVVIGKESSC.

Positions 1-22 (MDDKQKTNEEVKASSFDSEKSS) are enriched in basic and acidic residues. The tract at residues 1–71 (MDDKQKTNEE…DQTNTNNNEL (71 aa)) is disordered. A compositionally biased stretch (polar residues) spans 38–53 (QNVQHDNGSNPAQKQN).

This sequence belongs to the GrpE family. In terms of assembly, homodimer.

The protein resides in the cytoplasm. Functionally, participates actively in the response to hyperosmotic and heat shock by preventing the aggregation of stress-denatured proteins, in association with DnaK and GrpE. It is the nucleotide exchange factor for DnaK and may function as a thermosensor. Unfolded proteins bind initially to DnaJ; upon interaction with the DnaJ-bound protein, DnaK hydrolyzes its bound ATP, resulting in the formation of a stable complex. GrpE releases ADP from DnaK; ATP binding to DnaK triggers the release of the substrate protein, thus completing the reaction cycle. Several rounds of ATP-dependent interactions between DnaJ, DnaK and GrpE are required for fully efficient folding. This chain is Protein GrpE, found in Coprothermobacter proteolyticus (strain ATCC 35245 / DSM 5265 / OCM 4 / BT).